The following is a 147-amino-acid chain: Large ribosomal subunit protein uL13 (147 aa).

Residues 128–147 (PEHPHSAQQPVPYELKQVAQ) are disordered.

The protein belongs to the universal ribosomal protein uL13 family. Part of the 50S ribosomal subunit.

In terms of biological role, this protein is one of the early assembly proteins of the 50S ribosomal subunit, although it is not seen to bind rRNA by itself. It is important during the early stages of 50S assembly. This is Large ribosomal subunit protein uL13 from Mycobacterium bovis (strain BCG / Pasteur 1173P2).